A 780-amino-acid chain; its full sequence is ATP-dependent 6-phosphofructokinase, muscle type (780 aa).

Residue T2 is modified to N-acetylthreonine. Residues 2-390 form an N-terminal catalytic PFK domain 1 region; that stretch reads THEEHHAAKT…NWEVYKLLAH (389 aa). ATP contacts are provided by residues G25, 88-89, and 118-121; these read RC and GDGS. Mg(2+) is bound at residue D119. S133 carries the phosphoserine modification. Substrate contacts are provided by residues 164 to 166, R201, 208 to 210, E264, R292, and 298 to 301; these read SID, MGR, and HVQR. Residue D166 is the Proton acceptor of the active site. Residue S377 is modified to Phosphoserine. The interval 391–401 is interdomain linker; that stretch reads VRPPVSKSGSH. Residues 402–780 are C-terminal regulatory PFK domain 2; the sequence is TVAVMNVGAP…TRKRSGEGAV (379 aa). Beta-D-fructose 2,6-bisphosphate-binding positions include R471 and 528–532; that span reads TVSNN. A glycan (O-linked (GlcNAc) serine) is linked at S530. K557 is subject to N6-(2-hydroxyisobutyryl)lysine. Beta-D-fructose 2,6-bisphosphate-binding positions include R566, 573 to 575, E629, R655, and 661 to 664; these read MGG and HMQQ. S667 carries the phosphoserine modification. R735 lines the beta-D-fructose 2,6-bisphosphate pocket. A Phosphoserine modification is found at S775.

This sequence belongs to the phosphofructokinase type A (PFKA) family. ATP-dependent PFK group I subfamily. Eukaryotic two domain clade 'E' sub-subfamily. As to quaternary structure, homo- and heterotetramers. Phosphofructokinase (PFK) enzyme functions as a tetramer composed of different combinations of 3 types of subunits, called PFKM (M), PFKL (L) and PFKP (P). The composition of the PFK tetramer differs according to the tissue type it is present in. The kinetic and regulatory properties of the tetrameric enzyme are dependent on the subunit composition, hence can vary across tissues. Interacts (via C-terminus) with HK1 (via N-terminal spermatogenic cell-specific region). Mg(2+) is required as a cofactor. In terms of processing, glcNAcylation decreases enzyme activity.

It is found in the cytoplasm. It carries out the reaction beta-D-fructose 6-phosphate + ATP = beta-D-fructose 1,6-bisphosphate + ADP + H(+). The protein operates within carbohydrate degradation; glycolysis; D-glyceraldehyde 3-phosphate and glycerone phosphate from D-glucose: step 3/4. Its activity is regulated as follows. Allosterically activated by ADP, AMP, or fructose 2,6-bisphosphate, and allosterically inhibited by ATP or citrate. Catalyzes the phosphorylation of D-fructose 6-phosphate to fructose 1,6-bisphosphate by ATP, the first committing step of glycolysis. This chain is ATP-dependent 6-phosphofructokinase, muscle type (PFKM), found in Macaca fascicularis (Crab-eating macaque).